We begin with the raw amino-acid sequence, 514 residues long: Maturase K (514 aa).

The protein belongs to the intron maturase 2 family. MatK subfamily.

The protein localises to the plastid. The protein resides in the chloroplast. Its function is as follows. Usually encoded in the trnK tRNA gene intron. Probably assists in splicing its own and other chloroplast group II introns. This is Maturase K from Acer palmatum (Japanese maple).